Reading from the N-terminus, the 642-residue chain is MMILQVNQLSKSFGADTILNNIKLEVRNRDRIAIVGRNGAGKSTLLKIIAGQLSYEKGEIIKPKDITMGYLAQHTGLDSKLTIKEELLTVFDHLKAMEKEMRAMEEKMAAADPGELESIMKTYDRLQQEFKDKGGYQYEADVRSVLHGLGFSHFDDSTQVQSLSGGQKTRLALGKLLLTQPDLLILDEPTNHLDIDTLTWLEHYLQGYSGAILIVSHDRYFLDKVVNQVYEVSRAESKKYHGNYSAYLDQKAAQYEKDLKMYEKQQDEIAKLQDFVDRNLARASTTKRAQSRRKQLERMDVMSKPLGDEKSANFHFDITKQSGNEVLRVQDLTISYENQPPLLTEVSFMLTRGESAALVGPNGIGKSTLLKTLIDTLKPDQGTISYGSNVSVGYYDQEQAELTSSKRVLDELWDEYPGLPEKEIRTCLGNFLFSGDDVLKPVHSLSGGEKARLALAKLMLQKANFLILDEPTNHLDLDSKEVLENALIDYPGTLLFVSHDRYFINRIATRVLELSSSHIEEYLGDYDYYTEKKTEQLELEKMNQQEETDKTPATVKSDSKRSYEEEKEWKKKERQRLRRIEEIETTVQTIEENISRNDELLCDPEVYQDHEKVQAIHADNEKLNQELESLLSEWEELSTEED.

ABC transporter domains are found at residues 4–259 (LQVN…EKDL) and 327–541 (LRVQ…ELEK). ATP-binding positions include 36-43 (GRNGAGKS) and 360-367 (GPNGIGKS). Composition is skewed to basic and acidic residues over residues 541-550 (KMNQQEETDK) and 557-567 (SDSKRSYEEEK). Positions 541–567 (KMNQQEETDKTPATVKSDSKRSYEEEK) are disordered.

Belongs to the ABC transporter superfamily. ABCF family. YdiF subfamily.

The sequence is that of Putative ATP-binding protein YdiF (ydiF) from Bacillus subtilis (strain 168).